A 191-amino-acid polypeptide reads, in one-letter code: dCTP deaminase, dUMP-forming (191 aa).

DCTP is bound by residues 101–106 (KSSLGR), D119, 127–129 (TLE), Q148, Y162, and Q174. E129 acts as the Proton donor/acceptor in catalysis.

It belongs to the dCTP deaminase family. Homotrimer.

It carries out the reaction dCTP + 2 H2O = dUMP + NH4(+) + diphosphate. Its pathway is pyrimidine metabolism; dUMP biosynthesis; dUMP from dCTP: step 1/1. Its function is as follows. Bifunctional enzyme that catalyzes both the deamination of dCTP to dUTP and the hydrolysis of dUTP to dUMP without releasing the toxic dUTP intermediate. In Streptomyces avermitilis (strain ATCC 31267 / DSM 46492 / JCM 5070 / NBRC 14893 / NCIMB 12804 / NRRL 8165 / MA-4680), this protein is dCTP deaminase, dUMP-forming.